The chain runs to 512 residues: Gamma-aminobutyric acid receptor subunit beta-2 (512 aa).

The signal sequence occupies residues 1–25 (MWRVRKRGYFGIWSFPLIIAAVCAQ). Topologically, residues 26-244 (SVNDPSNMSL…SFKLKRNIGY (219 aa)) are extracellular. Asn32 and Asn104 each carry an N-linked (GlcNAc...) asparagine glycan. Tyr121 is a binding site for histamine. The cysteines at positions 160 and 174 are disulfide-linked. A glycan (N-linked (GlcNAc...) asparagine) is linked at Asn173. Histamine contacts are provided by residues 180 to 181 (SY) and Thr226. Positions 181 and 226 each coordinate 4-aminobutanoate. The next 3 helical transmembrane spans lie at 245–266 (FILQ…SFWI), 270–292 (ASAA…NTHL), and 304–326 (AIDM…YALV). The Cytoplasmic portion of the chain corresponds to 327–489 (NYIFFGRGPQ…DLTDVNAIDR (163 aa)). Tyr441 carries the phosphotyrosine modification. The chain crosses the membrane as a helical span at residues 490–511 (WSRIFFPVVFSFFNIVYWLYYV).

It belongs to the ligand-gated ion channel (TC 1.A.9) family. Gamma-aminobutyric acid receptor (TC 1.A.9.5) subfamily. GABRB2 sub-subfamily. As to quaternary structure, heteropentamer, formed by a combination of alpha (GABRA1-6), beta (GABRB1-3), gamma (GABRG1-3), delta (GABRD), epsilon (GABRE), rho (GABRR1-3), pi (GABRP) and theta (GABRQ) chains, each subunit exhibiting distinct physiological and pharmacological properties. Interacts with UBQLN1. May interact with KIF21B. Identified in a complex of 720 kDa composed of LHFPL4, NLGN2, GABRA1, GABRB2, GABRG2 and GABRB3. Post-translationally, glycosylated.

It is found in the postsynaptic cell membrane. It localises to the cell membrane. The protein localises to the cytoplasmic vesicle. The catalysed reaction is chloride(in) = chloride(out). Its activity is regulated as follows. Allosterically activated by benzodiazepines and the anesthetic etomidate. Inhibited by the antagonist bicuculline. Potentiated by histamine. In terms of biological role, beta subunit of the heteropentameric ligand-gated chloride channel gated by gamma-aminobutyric acid (GABA), a major inhibitory neurotransmitter in the brain. GABA-gated chloride channels, also named GABA(A) receptors (GABAAR), consist of five subunits arranged around a central pore and contain GABA active binding site(s) located at the alpha and beta subunit interface(s). When activated by GABA, GABAARs selectively allow the flow of chloride anions across the cell membrane down their electrochemical gradient. Chloride influx into the postsynaptic neuron following GABAAR opening decreases the neuron ability to generate a new action potential, thereby reducing nerve transmission. GABAARs containing alpha-1 and beta-2 or -3 subunits exhibit synaptogenic activity; the gamma-2 subunit being necessary but not sufficient to induce rapid synaptic contacts formation. Extrasynaptic beta-2 receptors contribute to the tonic GABAergic inhibition. Beta-containing GABAARs can simultaneously bind GABA and histamine where histamine binds at the interface of two neighboring beta subunits, which may be involved in the regulation of sleep and wakefulness. In Mus musculus (Mouse), this protein is Gamma-aminobutyric acid receptor subunit beta-2.